Reading from the N-terminus, the 288-residue chain is Acetyl-coenzyme A carboxylase carboxyl transferase subunit beta (288 aa).

Residues 34–288 enclose the CoA carboxyltransferase N-terminal domain; sequence LFAKCPACKH…HLVAFHGGVS (255 aa). Positions 38, 41, 56, and 59 each coordinate Zn(2+). The C4-type zinc-finger motif lies at 38-59; the sequence is CPACKHMIYQKDLGPAKICPTC.

This sequence belongs to the AccD/PCCB family. As to quaternary structure, acetyl-CoA carboxylase is a heterohexamer composed of biotin carboxyl carrier protein (AccB), biotin carboxylase (AccC) and two subunits each of ACCase subunit alpha (AccA) and ACCase subunit beta (AccD). The cofactor is Zn(2+).

The protein resides in the cytoplasm. It catalyses the reaction N(6)-carboxybiotinyl-L-lysyl-[protein] + acetyl-CoA = N(6)-biotinyl-L-lysyl-[protein] + malonyl-CoA. It functions in the pathway lipid metabolism; malonyl-CoA biosynthesis; malonyl-CoA from acetyl-CoA: step 1/1. Component of the acetyl coenzyme A carboxylase (ACC) complex. Biotin carboxylase (BC) catalyzes the carboxylation of biotin on its carrier protein (BCCP) and then the CO(2) group is transferred by the transcarboxylase to acetyl-CoA to form malonyl-CoA. The chain is Acetyl-coenzyme A carboxylase carboxyl transferase subunit beta from Streptococcus equi subsp. zooepidemicus (strain MGCS10565).